The chain runs to 117 residues: Larval cuticle protein A2B (117 aa).

Copy 1 of the repeat occupies 12–15 (AAPV). The Chitin-binding type R&amp;R domain maps to 29-95 (HPQYQYGYDV…AVVHREPLVA (67 aa)). Copy 2 of the repeat occupies 108–111 (AAPV).

In terms of biological role, component of the cuticle of the larva of Tenebrio molitor. The sequence is that of Larval cuticle protein A2B from Tenebrio molitor (Yellow mealworm beetle).